A 93-amino-acid chain; its full sequence is Aspartyl/glutamyl-tRNA(Asn/Gln) amidotransferase subunit C (93 aa).

Belongs to the GatC family. Heterotrimer of A, B and C subunits.

The catalysed reaction is L-glutamyl-tRNA(Gln) + L-glutamine + ATP + H2O = L-glutaminyl-tRNA(Gln) + L-glutamate + ADP + phosphate + H(+). The enzyme catalyses L-aspartyl-tRNA(Asn) + L-glutamine + ATP + H2O = L-asparaginyl-tRNA(Asn) + L-glutamate + ADP + phosphate + 2 H(+). Functionally, allows the formation of correctly charged Asn-tRNA(Asn) or Gln-tRNA(Gln) through the transamidation of misacylated Asp-tRNA(Asn) or Glu-tRNA(Gln) in organisms which lack either or both of asparaginyl-tRNA or glutaminyl-tRNA synthetases. The reaction takes place in the presence of glutamine and ATP through an activated phospho-Asp-tRNA(Asn) or phospho-Glu-tRNA(Gln). In Methanothrix thermoacetophila (strain DSM 6194 / JCM 14653 / NBRC 101360 / PT) (Methanosaeta thermophila), this protein is Aspartyl/glutamyl-tRNA(Asn/Gln) amidotransferase subunit C.